The primary structure comprises 179 residues: ATP synthase subunit b (179 aa).

The helical transmembrane segment at 23–43 threads the bilayer; it reads IFWLIITFGILYVVLSKLILP.

The protein belongs to the ATPase B chain family. As to quaternary structure, F-type ATPases have 2 components, F(1) - the catalytic core - and F(0) - the membrane proton channel. F(1) has five subunits: alpha(3), beta(3), gamma(1), delta(1), epsilon(1). F(0) has three main subunits: a(1), b(2) and c(10-14). The alpha and beta chains form an alternating ring which encloses part of the gamma chain. F(1) is attached to F(0) by a central stalk formed by the gamma and epsilon chains, while a peripheral stalk is formed by the delta and b chains.

Its subcellular location is the cell inner membrane. Functionally, f(1)F(0) ATP synthase produces ATP from ADP in the presence of a proton or sodium gradient. F-type ATPases consist of two structural domains, F(1) containing the extramembraneous catalytic core and F(0) containing the membrane proton channel, linked together by a central stalk and a peripheral stalk. During catalysis, ATP synthesis in the catalytic domain of F(1) is coupled via a rotary mechanism of the central stalk subunits to proton translocation. In terms of biological role, component of the F(0) channel, it forms part of the peripheral stalk, linking F(1) to F(0). This chain is ATP synthase subunit b, found in Pelagibacter ubique (strain HTCC1062).